The following is a 456-amino-acid chain: Peripherin (456 aa).

The segment covering 1–14 (MSHSGLRSTSTSYR) has biased composition (polar residues). Positions 1–55 (MSHSGLRSTSTSYRRTLGSSPVPSSYSSSSRLSTSRHFGSPSPGPSSRSSSSAFR) are disordered. Positions 1 to 90 (MSHSGLRSTS…FLTTRSNEKA (90 aa)) are head. Low complexity predominate over residues 16–55 (TLGSSPVPSSYSSSSRLSTSRHFGSPSPGPSSRSSSSAFR). The IF rod domain maps to 88–397 (EKAELQELND…KLLEGEESRI (310 aa)). Positions 91–123 (ELQELNDRFASFIEKVRYLEQQNAVLVTEINQA) are coil 1A. The linker 1 stretch occupies residues 124-134 (RSKEPTRASDL). Residues 135–230 (CQQELRELRK…KLHEEELNDV (96 aa)) form a coil 1B region. A linker 2 region spans residues 231–252 (QVSVQAQPVHMEIEAAKQPDLT). Residues 253–395 (SALRDIRSQY…YRKLLEGEES (143 aa)) are coil 2. The segment at 396–456 (RIAVPIHSLT…RKEQSSEGEK (61 aa)) is tail. A disordered region spans residues 411-456 (SPAAPEIDPSTETHTRKTVAIKTIETRDGEQVVTESRKEQSSEGEK). Residues 434–456 (IETRDGEQVVTESRKEQSSEGEK) are compositionally biased toward basic and acidic residues.

Belongs to the intermediate filament family. In terms of assembly, forms homodimers (in vitro). Homopolymerizes into a filamentous network (in vitro).

It localises to the cytoplasm. The protein resides in the cytoskeleton. The protein localises to the cell projection. It is found in the axon. Its subcellular location is the perikaryon. Its function is as follows. Class-III neuronal intermediate filament protein. My form an independent structural network without the involvement of other neurofilaments or may cooperate with other neuronal intermediate filament proteins to form a filamentous network. In Xenopus laevis (African clawed frog), this protein is Peripherin (prph).